We begin with the raw amino-acid sequence, 388 residues long: Succinate--CoA ligase [ADP-forming] subunit beta (388 aa).

The region spanning Lys9–Glu244 is the ATP-grasp domain. Residues Lys46, Gly53 to Gly55, Glu99, Ala102, and Glu107 contribute to the ATP site. The Mg(2+) site is built by Asn199 and Asp213. Substrate is bound by residues Asn264 and Gly321 to Met323.

Belongs to the succinate/malate CoA ligase beta subunit family. In terms of assembly, heterotetramer of two alpha and two beta subunits. Mg(2+) is required as a cofactor.

The catalysed reaction is succinate + ATP + CoA = succinyl-CoA + ADP + phosphate. It catalyses the reaction GTP + succinate + CoA = succinyl-CoA + GDP + phosphate. It participates in carbohydrate metabolism; tricarboxylic acid cycle; succinate from succinyl-CoA (ligase route): step 1/1. In terms of biological role, succinyl-CoA synthetase functions in the citric acid cycle (TCA), coupling the hydrolysis of succinyl-CoA to the synthesis of either ATP or GTP and thus represents the only step of substrate-level phosphorylation in the TCA. The beta subunit provides nucleotide specificity of the enzyme and binds the substrate succinate, while the binding sites for coenzyme A and phosphate are found in the alpha subunit. The protein is Succinate--CoA ligase [ADP-forming] subunit beta of Burkholderia cenocepacia (strain HI2424).